The primary structure comprises 268 residues: Tryptophan synthase alpha chain (268 aa).

Active-site proton acceptor residues include E49 and D60.

Belongs to the TrpA family. As to quaternary structure, tetramer of two alpha and two beta chains.

It catalyses the reaction (1S,2R)-1-C-(indol-3-yl)glycerol 3-phosphate + L-serine = D-glyceraldehyde 3-phosphate + L-tryptophan + H2O. It functions in the pathway amino-acid biosynthesis; L-tryptophan biosynthesis; L-tryptophan from chorismate: step 5/5. Its function is as follows. The alpha subunit is responsible for the aldol cleavage of indoleglycerol phosphate to indole and glyceraldehyde 3-phosphate. The chain is Tryptophan synthase alpha chain from Citrobacter koseri (strain ATCC BAA-895 / CDC 4225-83 / SGSC4696).